The primary structure comprises 164 residues: UPF0303 protein RHE_CH02903 (164 aa).

The protein belongs to the UPF0303 family.

This chain is UPF0303 protein RHE_CH02903, found in Rhizobium etli (strain ATCC 51251 / DSM 11541 / JCM 21823 / NBRC 15573 / CFN 42).